A 229-amino-acid chain; its full sequence is Cell division protein FtsQ (229 aa).

A helical transmembrane segment spans residues 1–21 (MIVLLCVIFAFLVYSNWHSWL). Residues 22–229 (ESLDRNPIRA…AAVGFSPLPK (208 aa)) are Periplasmic-facing. One can recognise a POTRA domain in the interval 27-97 (NPIRAYALTH…DRLSITLIEH (71 aa)).

It belongs to the FtsQ/DivIB family. FtsQ subfamily. In terms of assembly, part of a complex composed of FtsB, FtsL and FtsQ.

The protein resides in the cell inner membrane. Functionally, essential cell division protein. May link together the upstream cell division proteins, which are predominantly cytoplasmic, with the downstream cell division proteins, which are predominantly periplasmic. May control correct divisome assembly. This chain is Cell division protein FtsQ, found in Actinobacillus pleuropneumoniae serotype 3 (strain JL03).